We begin with the raw amino-acid sequence, 183 residues long: Cell division protein SepF (183 aa).

Positions 149–183 (SSEESAAPSVMAREEEATAPAAPSPAWGTQDAING) are disordered.

The protein belongs to the SepF family. As to quaternary structure, homodimer. Interacts with FtsZ.

The protein resides in the cytoplasm. Functionally, cell division protein that is part of the divisome complex and is recruited early to the Z-ring. Probably stimulates Z-ring formation, perhaps through the cross-linking of FtsZ protofilaments. Its function overlaps with FtsA. The chain is Cell division protein SepF from Synechococcus sp. (strain RCC307).